Here is a 406-residue protein sequence, read N- to C-terminus: S-adenosylmethionine synthase (406 aa).

ATP is bound at residue 141 to 146; sequence GQGSMD.

It belongs to the AdoMet synthase 2 family. As to quaternary structure, homodimer. It depends on Mg(2+) as a cofactor.

It catalyses the reaction L-methionine + ATP + H2O = S-adenosyl-L-methionine + phosphate + diphosphate. It functions in the pathway amino-acid biosynthesis; S-adenosyl-L-methionine biosynthesis; S-adenosyl-L-methionine from L-methionine: step 1/1. Catalyzes the formation of S-adenosylmethionine from methionine and ATP. This is S-adenosylmethionine synthase (mat) from Methanocaldococcus jannaschii (strain ATCC 43067 / DSM 2661 / JAL-1 / JCM 10045 / NBRC 100440) (Methanococcus jannaschii).